The following is an 84-amino-acid chain: LYR motif-containing protein 5B (84 aa).

Belongs to the complex I LYR family.

The polypeptide is LYR motif-containing protein 5B (lyrm5b) (Danio rerio (Zebrafish)).